The chain runs to 413 residues: Phosphoglycerate kinase (413 aa).

Residues D24 to N26, R39, H62 to R65, R123, and R165 each bind substrate. ATP contacts are provided by residues K216, E343, and G369 to S372.

The protein belongs to the phosphoglycerate kinase family. As to quaternary structure, monomer.

The protein localises to the cytoplasm. The enzyme catalyses (2R)-3-phosphoglycerate + ATP = (2R)-3-phospho-glyceroyl phosphate + ADP. Its pathway is carbohydrate degradation; glycolysis; pyruvate from D-glyceraldehyde 3-phosphate: step 2/5. This Mycoplasmoides gallisepticum (strain R(low / passage 15 / clone 2)) (Mycoplasma gallisepticum) protein is Phosphoglycerate kinase.